Reading from the N-terminus, the 360-residue chain is Phospho-N-acetylmuramoyl-pentapeptide-transferase (360 aa).

At 1–25 (MLVWLAEHLVKYYSGFNVFSYLTFR) the chain is on the periplasmic side. A helical transmembrane segment spans residues 26 to 46 (AIVSLLTALFISLWMGPRMIA). The Cytoplasmic segment spans residues 47 to 71 (HLQKLSFGQVVRNDGPESHFSKRGT). The helical transmembrane segment at 72 to 92 (PTMGGIMILTAIVISVLLWAY) threads the bilayer. Residue Pro-93 is a topological domain, periplasmic. Residues 94-114 (SNPYVWCVLVVLVGYGVIGFV) traverse the membrane as a helical segment. Residues 115–131 (DDYRKVVRKDTKGLIAR) lie on the Cytoplasmic side of the membrane. A helical membrane pass occupies residues 132–152 (WKYFWMSVIALGVAFALYLAG). Residues 153–167 (KDTPATQLVVPFFKD) lie on the Periplasmic side of the membrane. A helical membrane pass occupies residues 168–188 (VMPQLGLFYILLAYFVIVGTG). Residues 189 to 198 (NAVNLTDGLD) are Cytoplasmic-facing. The helical transmembrane segment at 199–219 (GLAIMPTVFVAGGFALVAWAT) threads the bilayer. Residues 220–235 (GNMNFASYLHIPYLRH) lie on the Periplasmic side of the membrane. The helical transmembrane segment at 236 to 256 (AGELVIVCTAIVGAGLGFLWF) threads the bilayer. Topologically, residues 257-262 (NTYPAQ) are cytoplasmic. Residues 263-283 (VFMGDVGSLALGGALGIIAVL) traverse the membrane as a helical segment. Over 284–287 (LRQE) the chain is Periplasmic. The helical transmembrane segment at 288–308 (FLLVIMGGVFVVETLSVILQV) threads the bilayer. Over 309 to 337 (GSFKLRGQRIFRMAPIHHHYELKGWPEPR) the chain is Cytoplasmic. The helical transmembrane segment at 338–358 (VIVRFWIISLMLVLIGLATLK) threads the bilayer. Over 359–360 (VR) the chain is Periplasmic.

Belongs to the glycosyltransferase 4 family. MraY subfamily. The cofactor is Mg(2+).

It localises to the cell inner membrane. The enzyme catalyses UDP-N-acetyl-alpha-D-muramoyl-L-alanyl-gamma-D-glutamyl-meso-2,6-diaminopimeloyl-D-alanyl-D-alanine + di-trans,octa-cis-undecaprenyl phosphate = di-trans,octa-cis-undecaprenyl diphospho-N-acetyl-alpha-D-muramoyl-L-alanyl-D-glutamyl-meso-2,6-diaminopimeloyl-D-alanyl-D-alanine + UMP. It participates in cell wall biogenesis; peptidoglycan biosynthesis. Catalyzes the initial step of the lipid cycle reactions in the biosynthesis of the cell wall peptidoglycan: transfers peptidoglycan precursor phospho-MurNAc-pentapeptide from UDP-MurNAc-pentapeptide onto the lipid carrier undecaprenyl phosphate, yielding undecaprenyl-pyrophosphoryl-MurNAc-pentapeptide, known as lipid I. The protein is Phospho-N-acetylmuramoyl-pentapeptide-transferase of Shigella boydii serotype 18 (strain CDC 3083-94 / BS512).